The chain runs to 518 residues: Wax ester synthase/diacylglycerol acyltransferase 6 (518 aa).

Basic and acidic residues predominate over residues 1–17 (MEIKTRRDTSETSVRKD). Residues 1–29 (MEIKTRRDTSETSVRKDDEEEVEEEQPLS) are disordered. Over 1 to 213 (MEIKTRRDTS…LMAGSRGDSR (213 aa)) the chain is Cytoplasmic. The active-site Proton acceptor is the His-163. Residues 185-205 (PDELPSLPNQNRSSSRSSRLM) form a disordered region. Residues 214–234 (FLWLVMVIWSAIMLVLNTVCD) traverse the membrane as a helical segment. At 235–518 (ALEFIATTMF…VQERDSRSLD (284 aa)) the chain is on the lumenal side. A glycan (N-linked (GlcNAc...) asparagine) is linked at Asn-430.

This sequence in the N-terminal section; belongs to the long-chain O-acyltransferase family. In terms of tissue distribution, expressed in roots, stems, leaves, flowers and siliques.

The protein localises to the cell membrane. The protein resides in the endoplasmic reticulum membrane. It localises to the golgi apparatus membrane. It catalyses the reaction an acyl-CoA + a 1,2-diacyl-sn-glycerol = a triacyl-sn-glycerol + CoA. The catalysed reaction is a long chain fatty alcohol + a fatty acyl-CoA = a wax ester + CoA. It participates in glycerolipid metabolism; triacylglycerol biosynthesis. It functions in the pathway lipid metabolism. Its function is as follows. Bifunctional wax ester synthase/diacylglycerol acyltransferase that uses acyl-CoAs with 16, 18 and 20 carbons as substrates, preferably in combination with 16:0ol alcohol. Involved in cuticular wax biosynthesis. In Arabidopsis thaliana (Mouse-ear cress), this protein is Wax ester synthase/diacylglycerol acyltransferase 6.